The primary structure comprises 509 residues: Probable cytochrome P450 6a14 (509 aa).

Cys454 serves as a coordination point for heme.

The protein belongs to the cytochrome P450 family. The cofactor is heme.

It is found in the endoplasmic reticulum membrane. The protein localises to the microsome membrane. In terms of biological role, may be involved in the metabolism of insect hormones and in the breakdown of synthetic insecticides. The polypeptide is Probable cytochrome P450 6a14 (Cyp6a14) (Drosophila melanogaster (Fruit fly)).